A 195-amino-acid polypeptide reads, in one-letter code: Thymidylate kinase (195 aa).

7–14 (GIDGVGKS) contacts ATP.

It belongs to the thymidylate kinase family.

The catalysed reaction is dTMP + ATP = dTDP + ADP. Its function is as follows. Phosphorylation of dTMP to form dTDP in both de novo and salvage pathways of dTTP synthesis. This is Thymidylate kinase from Campylobacter hominis (strain ATCC BAA-381 / DSM 21671 / CCUG 45161 / LMG 19568 / NCTC 13146 / CH001A).